Consider the following 381-residue polypeptide: RxLR effector protein 54 (381 aa).

A signal peptide spans 1-19; the sequence is MRFQSIMMLTITCAGTCLA. Residues 57–75 carry the RxLR-dEER motif; that stretch reads RFLRFDTVARDTAGNDEER. WY-domain regions lie at residues 97 to 150, 151 to 198, 199 to 247, 251 to 299, and 302 to 354; these read SAEE…ANNG, NQAF…SLSG, NWIR…WNKN, FFGD…LLTS, and SHKT…RDKI. The short motif at 372-381 is the ATG8 interacting motif element; that stretch reads KPLDFDWEIV.

It belongs to the RxLR effector family. As to quaternary structure, interacts via its C-terminal AIM with host ATG8CL.

It is found in the secreted. The protein resides in the host nucleus. The protein localises to the host cytoplasm. Effector that specifically binds host autophagy protein ATG8CL of the ATG8 family to stimulate autophagosome formation and subsequent autophagy rather than blocking autophagic flux. The pathogen remodels host-microbe interface by co-opting the host autophagy machinery which plays a key role in plant immunity. PexRD54 competes with the autophagy cargo receptor Joka2 to deplete it out of ATG8CL complexes and interferes with Joka2's positive effect on pathogen defense. This Phytophthora infestans (strain T30-4) (Potato late blight agent) protein is RxLR effector protein 54.